A 360-amino-acid polypeptide reads, in one-letter code: Mannan endo-1,4-beta-mannosidase (360 aa).

The N-terminal stretch at 1-24 is a signal peptide; sequence MLKKLAVCLSIVLLLLGAASPISA. Residues 36 to 347 form the GH26 domain; that stretch reads QTTKDIMNWL…YQNSWTLNKG (312 aa). His129 is a binding site for substrate. The Proton donor role is filled by Glu191. The substrate site is built by Trp196 and Tyr266. The Nucleophile role is filled by Glu290.

This sequence belongs to the glycosyl hydrolase 26 family. As to quaternary structure, homodimer.

Its subcellular location is the secreted. The enzyme catalyses Random hydrolysis of (1-&gt;4)-beta-D-mannosidic linkages in mannans, galactomannans and glucomannans.. Functionally, involved in the degradation of glucomannan. Catalyzes the endo hydrolysis of beta-1,4-linked mannan, galactomannan and glucomannan. This Bacillus subtilis protein is Mannan endo-1,4-beta-mannosidase.